The following is a 181-amino-acid chain: Shikimate kinase 2 (181 aa).

Residue glycine 12–threonine 17 participates in ATP binding. Mg(2+)-binding residues include threonine 16 and aspartate 32. Positions 34, 58, and 79 each coordinate substrate. Residues glutamate 112–lysine 126 form an LID domain region. Arginine 120 is an ATP binding site. Arginine 139 is a binding site for substrate.

The protein belongs to the shikimate kinase family. AroL subfamily. In terms of assembly, monomer. Mg(2+) serves as cofactor.

It is found in the cytoplasm. It carries out the reaction shikimate + ATP = 3-phosphoshikimate + ADP + H(+). Its pathway is metabolic intermediate biosynthesis; chorismate biosynthesis; chorismate from D-erythrose 4-phosphate and phosphoenolpyruvate: step 5/7. In terms of biological role, catalyzes the specific phosphorylation of the 3-hydroxyl group of shikimic acid using ATP as a cosubstrate. The chain is Shikimate kinase 2 from Salmonella heidelberg (strain SL476).